Here is a 425-residue protein sequence, read N- to C-terminus: MNYSRFLTATSLARKPSPIRTTADILSKAPKTLISLAPGSPNPSMFPFKSAAFTVENGSTIRFEDDLIKRALQYSPSYGIPELLSWLKQFQVKLHNPPTVNYPPNQGQMDLCITSGCQDGLCKAFEMLINPGDTILVNEPLFPGTLYAMKPLGCNIINVPSDEHGIIPEGLKKILSQWKPEDSKDPTKKTPKFLYTVPNGNNPTGNSLTGDRKKEIYELARKYDFLIIEDDPYYFLQFSKPWEPTFLSMDVDGRVIRADTFSKTVSSGLRVGFMTGPKTLIQNIVLHTQVSSVHACTLSQLMILQLLHQWGEEGFLAHIDRTIDFYKNQRDSILAAADKWLRGLAEWHVPKAGMFLWIKVKGISDTKQLIEEKAIEREVLLVPGNGFFIDGSAPTSFFRASFSLATPAQMDTAFQRLAQLIKESL.

A mitochondrion-targeting transit peptide spans 1-29 (MNYSRFLTATSLARKPSPIRTTADILSKA). R20 lines the substrate pocket. Residue S40 is modified to Phosphoserine. An N6-acetyllysine modification is found at K69. Substrate is bound at residue Y74. K172 carries the post-translational modification N6-succinyllysine. At K179 the chain carries N6-acetyllysine. N202 is a substrate binding site. At K263 the chain carries N6-(pyridoxal phosphate)lysine; alternate. N6-acetyllysine; alternate occurs at positions 263 and 339. N6-succinyllysine; alternate is present on residues K263 and K339. Position 351 is an N6-acetyllysine (K351). K367 carries the N6-acetyllysine; alternate modification. K367 is modified (N6-succinyllysine; alternate). R399 serves as a coordination point for substrate. Position 422 is an N6-acetyllysine (K422).

Belongs to the class-I pyridoxal-phosphate-dependent aminotransferase family. As to quaternary structure, homodimer. The cofactor is pyridoxal 5'-phosphate. Expressed mainly in kidney and to a lesser amount in liver and brain.

It is found in the mitochondrion. It carries out the reaction L-kynurenine + 2-oxoglutarate = kynurenate + L-glutamate + H2O. It catalyses the reaction L-2-aminoadipate + 2-oxoglutarate = 2-oxoadipate + L-glutamate. The enzyme catalyses glycine + 2-oxoglutarate = glyoxylate + L-glutamate. The catalysed reaction is L-kynurenine + glyoxylate = kynurenate + glycine + H2O. It carries out the reaction 3-hydroxy-L-kynurenine + glyoxylate = xanthurenate + glycine + H2O. It catalyses the reaction 2-oxohexanoate + L-kynurenine = L-2-aminohexanoate + kynurenate + H2O. The enzyme catalyses 3-phenylpyruvate + L-kynurenine = kynurenate + L-phenylalanine + H2O. The catalysed reaction is 4-methylsulfanyl-2-oxobutanoate + L-kynurenine = kynurenate + L-methionine + H2O. It carries out the reaction 2-oxo-3-sulfanylpropanoate + L-kynurenine = kynurenate + L-cysteine + H2O. It catalyses the reaction indole-3-pyruvate + L-kynurenine = kynurenate + L-tryptophan + H2O. The enzyme catalyses 2-oxopentanoate + L-kynurenine = L-2-aminopentanoate + kynurenate + H2O. The catalysed reaction is 4-methyl-2-oxopentanoate + L-kynurenine = kynurenate + L-leucine + H2O. It carries out the reaction glyoxylate + L-methionine = 4-methylsulfanyl-2-oxobutanoate + glycine. It catalyses the reaction L-2-aminoadipate + glyoxylate = 2-oxoadipate + glycine. The enzyme catalyses L-tyrosine + glyoxylate = 3-(4-hydroxyphenyl)pyruvate + glycine. The catalysed reaction is glyoxylate + L-phenylalanine = 3-phenylpyruvate + glycine. It carries out the reaction L-tryptophan + glyoxylate = indole-3-pyruvate + glycine. It catalyses the reaction L-leucine + glyoxylate = 4-methyl-2-oxopentanoate + glycine. The enzyme catalyses 2-oxobutanoate + L-kynurenine = (2S)-2-aminobutanoate + kynurenate + H2O. The catalysed reaction is 2-oxoadipate + L-kynurenine = L-2-aminoadipate + kynurenate + H2O. It functions in the pathway amino-acid degradation; L-lysine degradation via saccharopine pathway; glutaryl-CoA from L-lysine: step 4/6. Transaminase with broad substrate specificity. Has transaminase activity towards aminoadipate, kynurenine, methionine and glutamate. Shows activity also towards tryptophan, aspartate and hydroxykynurenine. Accepts a variety of oxo-acids as amino-group acceptors, with a preference for 2-oxoglutarate, 2-oxocaproic acid, phenylpyruvate and alpha-oxo-gamma-methiol butyric acid. Can also use glyoxylate as amino-group acceptor (in vitro). The protein is Kynurenine/alpha-aminoadipate aminotransferase, mitochondrial of Mus musculus (Mouse).